The sequence spans 191 residues: Cell division protein SepF (191 aa).

Polar residues predominate over residues 153 to 178 (FPEEVSPSNISSKKTSPYSLETNTTP). Positions 153-191 (FPEEVSPSNISSKKTSPYSLETNTTPEPAWGESKLSAFS) are disordered.

This sequence belongs to the SepF family. In terms of assembly, homodimer. Interacts with FtsZ.

Its subcellular location is the cytoplasm. Its function is as follows. Cell division protein that is part of the divisome complex and is recruited early to the Z-ring. Probably stimulates Z-ring formation, perhaps through the cross-linking of FtsZ protofilaments. Its function overlaps with FtsA. The sequence is that of Cell division protein SepF from Prochlorococcus marinus (strain MIT 9515).